The primary structure comprises 371 residues: Cytochrome b (371 aa).

The next 4 helical transmembrane spans lie at 25 to 45 (FGSM…FLAI), 69 to 90 (WIMQ…YIHI), 105 to 125 (WLSG…GYVL), and 170 to 190 (FFAL…IHII). H75 and H89 together coordinate heme b. Heme b is bound by residues H174 and H188. H193 provides a ligand contact to a ubiquinone. The next 4 membrane-spanning stretches (helical) occupy residues 218-238 (YKDL…LSFS), 280-300 (LGGT…PFTH), 312-332 (LSQT…WTAT), and 339-358 (FITI…IMNP).

It belongs to the cytochrome b family. In terms of assembly, the cytochrome bc1 complex contains 3 respiratory subunits (MT-CYB, CYC1 and UQCRFS1), 2 core proteins (UQCRC1 and UQCRC2) and probably 6 low-molecular weight proteins. The cofactor is heme b.

Its subcellular location is the mitochondrion inner membrane. In terms of biological role, component of the ubiquinol-cytochrome c reductase complex (complex III or cytochrome b-c1 complex) that is part of the mitochondrial respiratory chain. The b-c1 complex mediates electron transfer from ubiquinol to cytochrome c. Contributes to the generation of a proton gradient across the mitochondrial membrane that is then used for ATP synthesis. The sequence is that of Cytochrome b (MT-CYB) from Micrurus fulvius (Eastern coral snake).